We begin with the raw amino-acid sequence, 76 residues long: Tabkunin 2 (76 aa).

The first 20 residues, 1–20 (MKVLSLIFVIFSVLVLFASA), serve as a signal peptide directing secretion. The BPTI/Kunitz inhibitor domain maps to 25–75 (CDQPKAVGRCFAAFPKFYYNSSSGQCQAFIYGGCGGNENNFNTLEECNAKC). 3 cysteine pairs are disulfide-bonded: cysteine 25–cysteine 75, cysteine 34–cysteine 58, and cysteine 50–cysteine 71.

In terms of tissue distribution, expressed in salivary glands.

The protein localises to the secreted. Its function is as follows. Potent anticoagulant protein that inhibits the hydrolytic activities of all serine proteases tested (trypsin, thrombin, elastase, and chymotrypsin), with the highest efficacy on thrombin. The polypeptide is Tabkunin 2 (Tabanus yao (Horsefly)).